The primary structure comprises 642 residues: Myrosinase-binding protein 2 (642 aa).

4 Jacalin-type lectin domains span residues 2–151 (SEKV…HFFA), 156–291 (LKHF…HFAP), 334–477 (PNKV…YFAP), and 490–633 (SKKL…HAVP). The segment covering 296 to 334 (TPAPAPAPAPAPAPAPSPAPASAPVPAPAPTPAPAPAPP) has biased composition (pro residues). Disordered stretches follow at residues 296-338 (TPAP…NKVE) and 479-499 (TNST…RGGN). A compositionally biased stretch (low complexity) spans 479–490 (TNSTTPSTPSTS).

It belongs to the jacalin lectin family. In terms of tissue distribution, expressed in flowers. Detected mainly in ovules and styles of immature flowers, but also in pistils, styles, stamens, petals and embryos. Not detected in leaves.

The protein is Myrosinase-binding protein 2 (F-ATMBP) of Arabidopsis thaliana (Mouse-ear cress).